The sequence spans 917 residues: PAX3- and PAX7-binding protein 1 (917 aa).

The span at 1–11 (MFRKARRVNVR) shows a compositional bias: basic residues. Disordered stretches follow at residues 1-123 (MFRK…FKVK), 143-205 (LEKS…GAFS), and 229-275 (RKKR…RIVF). Position 16 is a phosphoserine (S16). A compositionally biased stretch (acidic residues) spans 16-28 (SEEEERERDEEQE). 2 stretches are compositionally biased toward gly residues: residues 40 to 50 (EEAGPGGGDRA) and 73 to 85 (AEAG…GAEP). Residue K149 forms a Glycyl lysine isopeptide (Lys-Gly) (interchain with G-Cter in SUMO1); alternate linkage. A Glycyl lysine isopeptide (Lys-Gly) (interchain with G-Cter in SUMO2); alternate cross-link involves residue K149. Residues S154, S155, and S158 each carry the phosphoserine modification. Positions 161–172 (PLDKTGHVKDTN) are enriched in basic and acidic residues. Residues 183–193 (GEDEMDMESEK) show a composition bias toward acidic residues. At S191 the chain carries Phosphoserine. Basic and acidic residues predominate over residues 234–256 (MARELGDFTPHDNEPGKGRLVRE). Positions 257–268 (DENDASDDEDDD) are enriched in acidic residues. Phosphoserine occurs at positions 262 and 295. 2 disordered regions span residues 362–381 (SSDA…TPSN) and 530–564 (AERE…EETS). The necessary and sufficient for interaction with PAX7 stretch occupies residues 378 to 558 (TPSNEMTPVT…MADHLEGLSS (181 aa)). The segment covering 542–554 (AREQTGKMADHLE) has biased composition (basic and acidic residues). Phosphoserine is present on residues S557 and S558. A Phosphothreonine modification is found at T563.

The protein belongs to the GCF family. Interacts with PAX3 and PAX7. Interacts with WDR5; associates with a histone methyltransferase (HMT) complex composed at least of RBBP5, ASH2L, SET1, SET2 and KMT2A/MLL1, KMT2D/MLL2, KMT2C/MLL3 and KMT2B/MLL4 through direct interaction with WDR5. Ubiquitous.

The protein localises to the nucleus. Its function is as follows. Adapter protein linking the transcription factors PAX3 and PAX7 to the histone methylation machinery and involved in myogenesis. Associates with a histone methyltransferase complex that specifically mediates dimethylation and trimethylation of 'Lys-4' of histone H3. Mediates the recruitment of that complex to the transcription factors PAX3 and PAX7 on chromatin to regulate the expression of genes involved in muscle progenitor cells proliferation including ID3 and CDC20. The polypeptide is PAX3- and PAX7-binding protein 1 (PAXBP1) (Homo sapiens (Human)).